A 443-amino-acid polypeptide reads, in one-letter code: Serine/threonine-protein kinase 40 (443 aa).

Basic and acidic residues predominate over residues 1 to 11 (MKRRASERDAG). Positions 1 to 26 (MKRRASERDAGETSARSKALCSSISG) are disordered. Residues 14–26 (SARSKALCSSISG) are compositionally biased toward polar residues. The 298-residue stretch at 35–332 (FILGPRLGNS…EVLESLGAII (298 aa)) folds into the Protein kinase domain. ATP is bound by residues 41-49 (LGNSPVPSI) and Lys-66. Asp-197 functions as the Proton acceptor in the catalytic mechanism.

It belongs to the protein kinase superfamily. CAMK Ser/Thr protein kinase family.

It localises to the nucleus. The protein localises to the cytoplasm. The enzyme catalyses L-seryl-[protein] + ATP = O-phospho-L-seryl-[protein] + ADP + H(+). The catalysed reaction is L-threonyl-[protein] + ATP = O-phospho-L-threonyl-[protein] + ADP + H(+). Functionally, may be a negative regulator of NF-kappa-B and p53-mediated gene transcription. The protein is Serine/threonine-protein kinase 40 (stk40) of Xenopus tropicalis (Western clawed frog).